A 469-amino-acid polypeptide reads, in one-letter code: GTPase Der (469 aa).

EngA-type G domains are found at residues 3–166 (PVIA…PEDE) and 177–350 (LRLA…ESAN). GTP is bound by residues 9–16 (GRPNVGKS), 56–60 (DTGGI), 118–121 (NKVD), 183–190 (GRPNVGKS), 230–234 (DTAGV), and 295–298 (NKWD). In terms of domain architecture, KH-like spans 351–435 (LKVSPAKLTQ…PVKIEFKTSE (85 aa)).

Belongs to the TRAFAC class TrmE-Era-EngA-EngB-Septin-like GTPase superfamily. EngA (Der) GTPase family. In terms of assembly, associates with the 50S ribosomal subunit.

Its function is as follows. GTPase that plays an essential role in the late steps of ribosome biogenesis. In Acinetobacter baumannii (strain SDF), this protein is GTPase Der.